A 432-amino-acid chain; its full sequence is Short/branched chain specific acyl-CoA dehydrogenase, mitochondrial (432 aa).

A mitochondrion-targeting transit peptide spans 1-33; it reads MEGLAVRLLRGSRLLRRNFLTCLSSWKIPPHVS. N6-acetyllysine; alternate is present on Lys-70. At Lys-70 the chain carries N6-succinyllysine; alternate. FAD-binding positions include 174–183 and 207–209; these read FCLSEAGAGS and WIS. Ser-183 provides a ligand contact to substrate. Ser-183 bears the Phosphoserine mark. Substrate is bound by residues Tyr-229 and Tyr-283. Lys-284 carries the N6-acetyllysine; alternate modification. Lys-284 carries the N6-succinyllysine; alternate modification. Residue 291-294 participates in substrate binding; sequence NEGR. FAD contacts are provided by residues Arg-319, Gln-330, and 387-391; that span reads EWMGG. Residue Glu-414 is the Proton acceptor of the active site. An FAD-binding site is contributed by 416–418; sequence ASN. Lys-426 bears the N6-acetyllysine mark.

The protein belongs to the acyl-CoA dehydrogenase family. As to quaternary structure, homotetramer. It depends on FAD as a cofactor. Ubiquitously expressed.

It localises to the mitochondrion matrix. It carries out the reaction 2-methylbutanoyl-CoA + oxidized [electron-transfer flavoprotein] + H(+) = (2E)-2-methylbut-2-enoyl-CoA + reduced [electron-transfer flavoprotein]. It catalyses the reaction (2S)-2-methylbutanoyl-CoA + oxidized [electron-transfer flavoprotein] + H(+) = (2E)-2-methylbut-2-enoyl-CoA + reduced [electron-transfer flavoprotein]. The catalysed reaction is (2R)-2-methylbutanoyl-CoA + oxidized [electron-transfer flavoprotein] + H(+) = ethylacryloyl-CoA + reduced [electron-transfer flavoprotein]. The enzyme catalyses butanoyl-CoA + oxidized [electron-transfer flavoprotein] + H(+) = (2E)-butenoyl-CoA + reduced [electron-transfer flavoprotein]. It carries out the reaction 2-methylpropanoyl-CoA + oxidized [electron-transfer flavoprotein] + H(+) = 2-methylpropenoyl-CoA + reduced [electron-transfer flavoprotein]. It catalyses the reaction hexanoyl-CoA + oxidized [electron-transfer flavoprotein] + H(+) = (2E)-hexenoyl-CoA + reduced [electron-transfer flavoprotein]. The catalysed reaction is 2-methylhexanoyl-CoA + oxidized [electron-transfer flavoprotein] + H(+) = 2-methylhexenoyl-CoA + reduced [electron-transfer flavoprotein]. The enzyme catalyses valproyl-CoA + oxidized [electron-transfer flavoprotein] + H(+) = (2E)-2-propylpent-2-enoyl-CoA + reduced [electron-transfer flavoprotein]. It functions in the pathway lipid metabolism; mitochondrial fatty acid beta-oxidation. The protein operates within amino-acid degradation; L-isoleucine degradation. With respect to regulation, competitively inhibited by valproyl-CoA. In terms of biological role, short and branched chain specific acyl-CoA dehydrogenase that catalyzes the removal of one hydrogen from C-2 and C-3 of the fatty acyl-CoA thioester, resulting in the formation of trans-2-enoyl-CoA. Among the different mitochondrial acyl-CoA dehydrogenases, acts specifically on short and branched chain acyl-CoA derivatives such as (S)-2-methylbutyryl-CoA as well as short straight chain acyl-CoAs such as butyryl-CoA. Plays an important role in the metabolism of L-isoleucine by catalyzing the dehydrogenation of 2-methylbutyryl-CoA, one of the steps of the L-isoleucine catabolic pathway. Can also act on valproyl-CoA, a metabolite of valproic acid, an antiepileptic drug. This is Short/branched chain specific acyl-CoA dehydrogenase, mitochondrial from Homo sapiens (Human).